The sequence spans 134 residues: ATP synthase epsilon chain (134 aa).

Belongs to the ATPase epsilon chain family. F-type ATPases have 2 components, CF(1) - the catalytic core - and CF(0) - the membrane proton channel. CF(1) has five subunits: alpha(3), beta(3), gamma(1), delta(1), epsilon(1). CF(0) has three main subunits: a, b and c.

Its subcellular location is the cell membrane. In terms of biological role, produces ATP from ADP in the presence of a proton gradient across the membrane. In Anoxybacillus flavithermus (strain DSM 21510 / WK1), this protein is ATP synthase epsilon chain.